A 1074-amino-acid chain; its full sequence is BRD4-interacting chromatin-remodeling complex-associated protein-like (1074 aa).

Disordered regions lie at residues 542–603 (AVSS…NTPG), 620–689 (TSPI…GQKR), 834–874 (TPLD…HDQF), and 887–952 (GNIS…SKLP). Polar residues-rich tracts occupy residues 544–576 (SSAS…QANR), 591–603 (ASKS…NTPG), 620–629 (TSPIPTSKTT), and 660–680 (GATQ…TAVQ). A Phosphoserine modification is found at S621. Basic and acidic residues-rich tracts occupy residues 889-904 (ISKK…KFDR), 913-925 (PPED…DPAK), and 934-948 (EGHR…HGSE). S976 carries the post-translational modification Phosphoserine.

In terms of assembly, component of the multiprotein chromatin-remodeling complexes SWI/SNF: SWI/SNF-A (BAF), SWI/SNF-B (PBAF) and related complexes. The canonical complex contains a catalytic subunit (either SMARCA4/BRG1/BAF190A or SMARCA2/BRM/BAF190B) and at least SMARCE1, ACTL6A/BAF53, SMARCC1/BAF155, SMARCC2/BAF170, and SMARCB1/SNF5/BAF47. Other subunits specific to each of the complexes may also be present permitting several possible combinations developmentally and tissue specific. Component of the SWI/SNF (GBAF) subcomplex, which includes at least BICRA or BICRAL (mutually exclusive), BRD9, SS18, the core BAF subunits, SMARCA2/BRM, SMARCA4/BRG1/BAF190A, ACTL6A/BAF53, SMARCC1/BAF155, and SMARCD1/BAF60A.

Functionally, component of SWI/SNF chromatin remodeling subcomplex GBAF that carries out key enzymatic activities, changing chromatin structure by altering DNA-histone contacts within a nucleosome in an ATP-dependent manner. In Mus musculus (Mouse), this protein is BRD4-interacting chromatin-remodeling complex-associated protein-like.